The primary structure comprises 152 residues: Ribonuclease pancreatic (152 aa).

The signal sequence occupies residues 1–24; the sequence is MALDKSVILLPLLVLVLLVLGCLG. Residues Lys-31 and Arg-34 each contribute to the substrate site. His-36 functions as the Proton acceptor in the catalytic mechanism. Asn-46 is a glycosylation site (N-linked (GlcNAc...) asparagine). 4 disulfides stabilise this stretch: Cys-50/Cys-108, Cys-64/Cys-119, Cys-82/Cys-134, and Cys-89/Cys-96. Residues 65 to 69, Lys-90, and Arg-109 each bind substrate; that span reads KPVNT. N-linked (GlcNAc...) asparagine glycosylation is present at Asn-112. His-143 (proton donor) is an active-site residue.

It belongs to the pancreatic ribonuclease family. In terms of assembly, monomer. Interacts with and forms tight 1:1 complexes with RNH1. Dimerization of two such complexes may occur. Interaction with RNH1 inhibits this protein.

The protein localises to the secreted. The enzyme catalyses an [RNA] containing cytidine + H2O = an [RNA]-3'-cytidine-3'-phosphate + a 5'-hydroxy-ribonucleotide-3'-[RNA].. It carries out the reaction an [RNA] containing uridine + H2O = an [RNA]-3'-uridine-3'-phosphate + a 5'-hydroxy-ribonucleotide-3'-[RNA].. Its function is as follows. Endonuclease that catalyzes the cleavage of RNA on the 3' side of pyrimidine nucleotides. Acts on single-stranded and double-stranded RNA. This Papio hamadryas (Hamadryas baboon) protein is Ribonuclease pancreatic (RNASE1).